The chain runs to 556 residues: MQREYDYIIIGAGSAGNVLAARLTEDPGVSVLLLEAGGPDYRLDFRTQMPAALAFPLQGRRYNWAYETEPEPHMDNRRMECGRGKGLGGSSLINGMCYIRGNALDFDHWAKRPGLEDWGYRDVLPYFRKAETRDIGANDYHGGEGPVSVATPKNDNNVLFQAMVDAGVQAGYPRTDDLNGYQQEGFGPMDRTVTPQGRRASTARGYLDMAKPRDSLHIVTHATTDRILFAGKRAVGVHYLVGNSSEGIDAHARREVLVCAGAIASPQLLQRSGVGAPDLLRALDVQLVHDLPGVGQNLQDHLEVYMQYACTKPVSLYPALQWWNQPAIGAEWLFAGTGTGASNQFEAGGFIRTREEFDWPNIQYHFLPVAINYNGSNAVKEHGFQAHVGSMRTPSRGRVHARSRDPRQHPSILFNYQSTDQDWQEFRDAIRITREIIAQPALDPYRGREISPSADCKTDAELDAFVRARAETAYHPSCSCAMGTDDMAVVDGQGRVHGMEGLRVIDASIMPRIITGNLNATTIMIAEKIVDRIRGRAPLPRSTADYYVAGDAPVRR.

Residue 6–35 coordinates FAD; it reads DYIIIGAGSAGNVLAARLTEDPGVSVLLLE. The active-site Proton acceptor is His-475.

It belongs to the GMC oxidoreductase family. It depends on FAD as a cofactor.

The catalysed reaction is choline + A = betaine aldehyde + AH2. It carries out the reaction betaine aldehyde + NAD(+) + H2O = glycine betaine + NADH + 2 H(+). Its pathway is amine and polyamine biosynthesis; betaine biosynthesis via choline pathway; betaine aldehyde from choline (cytochrome c reductase route): step 1/1. Its function is as follows. Involved in the biosynthesis of the osmoprotectant glycine betaine. Catalyzes the oxidation of choline to betaine aldehyde and betaine aldehyde to glycine betaine at the same rate. The sequence is that of Oxygen-dependent choline dehydrogenase from Xanthomonas campestris pv. campestris (strain 8004).